Here is a 222-residue protein sequence, read N- to C-terminus: Type II restriction enzyme MjaI (222 aa).

It catalyses the reaction Endonucleolytic cleavage of DNA to give specific double-stranded fragments with terminal 5'-phosphates.. In terms of biological role, a P subtype restriction enzyme that recognizes the double-stranded sequence 5'-CTAG-3'; the cleavage site is unknown. The protein is Type II restriction enzyme MjaI (mjaIR) of Methanocaldococcus jannaschii (strain ATCC 43067 / DSM 2661 / JAL-1 / JCM 10045 / NBRC 100440) (Methanococcus jannaschii).